A 419-amino-acid polypeptide reads, in one-letter code: Carboxypeptidase A1 (419 aa).

An N-terminal signal peptide occupies residues M1–G16. A propeptide spans N17 to R110 (activation peptide). The 294-residue stretch at T121–T414 folds into the Peptidase M14 domain. Residues H179 and E182 each contribute to the Zn(2+) site. Residues H179–E182, R237, and N254–R255 contribute to the substrate site. An intrachain disulfide couples C248 to C271. H306 lines the Zn(2+) pocket. Residues S307 to Y308 and Y358 contribute to the substrate site. The Proton donor/acceptor role is filled by E380.

Belongs to the peptidase M14 family. In terms of assembly, monomer. May form a complex with proelastase 2. Zn(2+) serves as cofactor.

The protein localises to the secreted. It catalyses the reaction Release of a C-terminal amino acid, but little or no action with -Asp, -Glu, -Arg, -Lys or -Pro.. The enzyme catalyses leukotriene C4 + H2O = leukotriene F4 + glycine. In terms of biological role, carboxypeptidase that catalyzes the release of a C-terminal amino acid, but has little or no action with -Asp, -Glu, -Arg, -Lys or -Pro. Catalyzes the conversion of leukotriene C4 to leukotriene F4 via the hydrolysis of an amide bond. The sequence is that of Carboxypeptidase A1 from Rattus norvegicus (Rat).